A 295-amino-acid chain; its full sequence is Bifunctional protein FolD (295 aa).

Residues 166–168, Ser191, and Ile232 each bind NADP(+); that span reads GRS.

Belongs to the tetrahydrofolate dehydrogenase/cyclohydrolase family. As to quaternary structure, homodimer.

It catalyses the reaction (6R)-5,10-methylene-5,6,7,8-tetrahydrofolate + NADP(+) = (6R)-5,10-methenyltetrahydrofolate + NADPH. The catalysed reaction is (6R)-5,10-methenyltetrahydrofolate + H2O = (6R)-10-formyltetrahydrofolate + H(+). It functions in the pathway one-carbon metabolism; tetrahydrofolate interconversion. Its function is as follows. Catalyzes the oxidation of 5,10-methylenetetrahydrofolate to 5,10-methenyltetrahydrofolate and then the hydrolysis of 5,10-methenyltetrahydrofolate to 10-formyltetrahydrofolate. The sequence is that of Bifunctional protein FolD from Rhodopseudomonas palustris (strain BisB5).